We begin with the raw amino-acid sequence, 250 residues long: Triosephosphate isomerase (250 aa).

9-11 (NWK) contributes to the substrate binding site. His-94 (electrophile) is an active-site residue. Glu-165 (proton acceptor) is an active-site residue. Residues Gly-171, Ser-211, and 232–233 (GG) contribute to the substrate site.

The protein belongs to the triosephosphate isomerase family. As to quaternary structure, homodimer.

Its subcellular location is the cytoplasm. It carries out the reaction D-glyceraldehyde 3-phosphate = dihydroxyacetone phosphate. It participates in carbohydrate biosynthesis; gluconeogenesis. Its pathway is carbohydrate degradation; glycolysis; D-glyceraldehyde 3-phosphate from glycerone phosphate: step 1/1. Involved in the gluconeogenesis. Catalyzes stereospecifically the conversion of dihydroxyacetone phosphate (DHAP) to D-glyceraldehyde-3-phosphate (G3P). The chain is Triosephosphate isomerase from Alkalilimnicola ehrlichii (strain ATCC BAA-1101 / DSM 17681 / MLHE-1).